A 115-amino-acid polypeptide reads, in one-letter code: uncharacterized protein (115 aa).

Residues 1-115 (MGVEISLDPP…ETVIKLSAAE (115 aa)) form the MSP domain.

This is an uncharacterized protein from Caenorhabditis elegans.